Consider the following 230-residue polypeptide: 7-cyano-7-deazaguanine synthase (230 aa).

Residue 9 to 19 participates in ATP binding; sequence LSGGLDSATTA. Zn(2+) contacts are provided by cysteine 190, cysteine 198, cysteine 201, and cysteine 204.

This sequence belongs to the QueC family. It depends on Zn(2+) as a cofactor.

The catalysed reaction is 7-carboxy-7-deazaguanine + NH4(+) + ATP = 7-cyano-7-deazaguanine + ADP + phosphate + H2O + H(+). It participates in purine metabolism; 7-cyano-7-deazaguanine biosynthesis. Catalyzes the ATP-dependent conversion of 7-carboxy-7-deazaguanine (CDG) to 7-cyano-7-deazaguanine (preQ(0)). This is 7-cyano-7-deazaguanine synthase from Microcystis aeruginosa (strain NIES-843 / IAM M-2473).